Here is a 246-residue protein sequence, read N- to C-terminus: Exosome complex component SKI6 (246 aa).

It belongs to the RNase PH family. Component of the RNA exosome complex. Specifically part of the catalytically inactive RNA exosome core complex (Exo-9) which may associate with the catalytic subunits RRP6 and DIS3 in cytoplasmic- and nuclear-specific RNA exosome complex forms. Exo-9 is formed by a hexameric base ring of RNase PH domain-containing subunits and a cap ring consisting of CSL4, RRP4 and RRP40.

Its subcellular location is the cytoplasm. It localises to the nucleus. It is found in the nucleolus. Its function is as follows. Non-catalytic component of the RNA exosome complex which has 3'-&gt;5' exoribonuclease activity and participates in a multitude of cellular RNA processing and degradation events. In the nucleus, the RNA exosome complex is involved in proper maturation of stable RNA species such as rRNA, snRNA and snoRNA, in the elimination of RNA processing by-products and non-coding 'pervasive' transcripts, such as antisense RNA species and cryptic unstable transcripts (CUTs), and of mRNAs with processing defects, thereby limiting or excluding their export to the cytoplasm. In the cytoplasm, the RNA exosome complex is involved in general mRNA turnover and in RNA surveillance pathways, preventing translation of aberrant mRNAs. The catalytic inactive RNA exosome core complex of 9 subunits (Exo-9) is proposed to play a pivotal role in the binding and presentation of RNA for ribonucleolysis, and to serve as a scaffold for the association with catalytic subunits and accessory proteins or complexes. SKI6 is part of the hexameric ring of RNase PH domain-containing subunits proposed to form a central channel which threads RNA substrates for degradation. In Saccharomyces cerevisiae (strain ATCC 204508 / S288c) (Baker's yeast), this protein is Exosome complex component SKI6 (SKI6).